We begin with the raw amino-acid sequence, 169 residues long: MAEMAELCELYEESNELQMDVLPGEGYMEVGRGARGPAPEEGPMEEEAGPAAARAQRGLFPEAGADLEGDEFDDWEDDYEFPEEERWSGAMHRVSAALEEANKVFLRTARAGDALDGGFQARCEKSPFDQLAFIEELFSLMVVNRLTEELGCDEIIDRELMLTREEETT.

A disordered region spans residues 31–50; that stretch reads GRGARGPAPEEGPMEEEAGP. The tract at residues 54–120 is interaction with NR0B2; it reads RAQRGLFPEA…AGDALDGGFQ (67 aa). The LXCXE motif motif lies at 150-154; sequence LGCDE.

In terms of assembly, interacts via its LXCXE motif with the entire pocket region of RB1. Interacts with EP300, NR0B2 and TRIM27. Expressed in all adult tissues examined and during embryogenesis.

It is found in the nucleus. The protein resides in the cytoplasm. Its function is as follows. Interacts with RB1 and EP300 and acts as a repressor of MYOD1 transactivation. Inhibits EP300 and CBP histone acetyltransferase activity. May be involved in coupling cell cycle exit to the transcriptional activation of genes required for cellular differentiation. May act as a candidate coinhibitory factor for NR0B2 that can be directly linked to transcription inhibitory mechanisms. The sequence is that of EP300-interacting inhibitor of differentiation 1 from Mus musculus (Mouse).